A 294-amino-acid polypeptide reads, in one-letter code: tRNA pseudouridine synthase B (294 aa).

Residue D38 is the Nucleophile of the active site.

The protein belongs to the pseudouridine synthase TruB family. Type 1 subfamily.

The catalysed reaction is uridine(55) in tRNA = pseudouridine(55) in tRNA. In terms of biological role, responsible for synthesis of pseudouridine from uracil-55 in the psi GC loop of transfer RNAs. This chain is tRNA pseudouridine synthase B, found in Clostridium perfringens (strain 13 / Type A).